A 371-amino-acid chain; its full sequence is Putative F-box/kelch-repeat protein At3g10510 (371 aa).

One can recognise an F-box domain in the interval 13–61 (SVMTSIPDDVIMECIAPRVPRYNHSMLSLVSKQFRSLVASPRLYKTRSL). 3 Kelch repeats span residues 123 to 165 (NIFV…DMPV), 178 to 229 (KIYI…GPSS), and 257 to 305 (NECV…YIVS).

The polypeptide is Putative F-box/kelch-repeat protein At3g10510 (Arabidopsis thaliana (Mouse-ear cress)).